Here is an 833-residue protein sequence, read N- to C-terminus: DNA ligase (833 aa).

NAD(+)-binding positions include 35–39 (DADYD), 84–85 (SL), and Glu-115. Catalysis depends on Lys-117, which acts as the N6-AMP-lysine intermediate. Residues Arg-138, Glu-175, Lys-292, and Lys-316 each contribute to the NAD(+) site. Residues Cys-410, Cys-413, Cys-428, and Cys-434 each coordinate Zn(2+). A BRCT domain is found at 750-833 (EKTGPLDGQT…AFLGDHGQQP (84 aa)).

The protein belongs to the NAD-dependent DNA ligase family. LigA subfamily. The cofactor is Mg(2+). Mn(2+) serves as cofactor.

It carries out the reaction NAD(+) + (deoxyribonucleotide)n-3'-hydroxyl + 5'-phospho-(deoxyribonucleotide)m = (deoxyribonucleotide)n+m + AMP + beta-nicotinamide D-nucleotide.. Its function is as follows. DNA ligase that catalyzes the formation of phosphodiester linkages between 5'-phosphoryl and 3'-hydroxyl groups in double-stranded DNA using NAD as a coenzyme and as the energy source for the reaction. It is essential for DNA replication and repair of damaged DNA. This is DNA ligase from Xanthomonas axonopodis pv. citri (strain 306).